Reading from the N-terminus, the 453-residue chain is Bis(5'-adenosyl)-triphosphatase ENPP4 (453 aa).

A signal peptide spans methionine 1–glycine 18. Topologically, residues asparagine 19–alanine 407 are extracellular. Zn(2+)-binding residues include aspartate 34 and threonine 70. Catalysis depends on threonine 70, which acts as the AMP-threonine intermediate. The substrate site is built by asparagine 91 and tyrosine 154. Residue asparagine 166 is glycosylated (N-linked (GlcNAc...) asparagine). The Zn(2+) site is built by aspartate 189, histidine 193, aspartate 237, and histidine 238. Aspartate 189 contacts substrate. Cysteine 254 and cysteine 287 are oxidised to a cystine. Asparagine 276 carries N-linked (GlcNAc...) asparagine glycosylation. Position 336 (histidine 336) interacts with Zn(2+). Cysteine 394 and cysteine 401 are joined by a disulfide. Residues isoleucine 408–methionine 428 traverse the membrane as a helical segment. The Cytoplasmic segment spans residues glutamine 429–glycine 453.

Belongs to the nucleotide pyrophosphatase/phosphodiesterase family. Zn(2+) is required as a cofactor.

It localises to the cell membrane. The catalysed reaction is P(1),P(3)-bis(5'-adenosyl) triphosphate + H2O = AMP + ADP + 2 H(+). Its function is as follows. Hydrolyzes extracellular Ap3A into AMP and ADP, and Ap4A into AMP and ATP. Ap3A and Ap4A are diadenosine polyphosphates thought to induce proliferation of vascular smooth muscle cells. Acts as a procoagulant, mediating platelet aggregation at the site of nascent thrombus via release of ADP from Ap3A and activation of ADP receptors. The sequence is that of Bis(5'-adenosyl)-triphosphatase ENPP4 (ENPP4) from Bos taurus (Bovine).